A 346-amino-acid chain; its full sequence is N-acetyl-gamma-glutamyl-phosphate reductase (346 aa).

C150 is a catalytic residue.

Belongs to the NAGSA dehydrogenase family. Type 1 subfamily.

It is found in the cytoplasm. The enzyme catalyses N-acetyl-L-glutamate 5-semialdehyde + phosphate + NADP(+) = N-acetyl-L-glutamyl 5-phosphate + NADPH + H(+). It functions in the pathway amino-acid biosynthesis; L-arginine biosynthesis; N(2)-acetyl-L-ornithine from L-glutamate: step 3/4. Its function is as follows. Catalyzes the NADPH-dependent reduction of N-acetyl-5-glutamyl phosphate to yield N-acetyl-L-glutamate 5-semialdehyde. This Desulforudis audaxviator (strain MP104C) protein is N-acetyl-gamma-glutamyl-phosphate reductase.